Consider the following 25-residue polypeptide: Arginine attenuator peptide (25 aa).

Belongs to the arginine attenuator peptide family.

Arginine attenuator peptide (AAP) that has a regulatory role in the production of arginine-specific carbamoyl phosphate synthetase. Encoded by an upstream open reading frame (uORF) within the 5'-leader region of arginine-specific carbamoyl phosphate synthetase small chain (CPA1) mRNA, it attenuates the translation of the downstream CPA1 ORF. In the presence of high concentrations of arginine, ribosomes translating the uORF encoding AAP stall at the termination codon, resulting in reduced translation from the downstream CPA1 initiation codon. The protein is Arginine attenuator peptide of Saccharomyces cerevisiae (strain ATCC 204508 / S288c) (Baker's yeast).